A 207-amino-acid polypeptide reads, in one-letter code: ATP-dependent Clp protease proteolytic subunit (207 aa).

Residue serine 112 is the Nucleophile of the active site. Histidine 137 is an active-site residue.

The protein belongs to the peptidase S14 family. As to quaternary structure, fourteen ClpP subunits assemble into 2 heptameric rings which stack back to back to give a disk-like structure with a central cavity, resembling the structure of eukaryotic proteasomes.

Its subcellular location is the cytoplasm. The catalysed reaction is Hydrolysis of proteins to small peptides in the presence of ATP and magnesium. alpha-casein is the usual test substrate. In the absence of ATP, only oligopeptides shorter than five residues are hydrolyzed (such as succinyl-Leu-Tyr-|-NHMec, and Leu-Tyr-Leu-|-Tyr-Trp, in which cleavage of the -Tyr-|-Leu- and -Tyr-|-Trp bonds also occurs).. In terms of biological role, cleaves peptides in various proteins in a process that requires ATP hydrolysis. Has a chymotrypsin-like activity. Plays a major role in the degradation of misfolded proteins. The sequence is that of ATP-dependent Clp protease proteolytic subunit from Bacteroides fragilis (strain ATCC 25285 / DSM 2151 / CCUG 4856 / JCM 11019 / LMG 10263 / NCTC 9343 / Onslow / VPI 2553 / EN-2).